Here is a 230-residue protein sequence, read N- to C-terminus: GTP cyclohydrolase III (230 aa).

This sequence belongs to the archaeal-type GTP cyclohydrolase family.

The catalysed reaction is GTP + 3 H2O = 2-amino-5-formylamino-6-(5-phospho-D-ribosylamino)pyrimidin-4(3H)-one + 2 phosphate + 2 H(+). Functionally, catalyzes the formation of 2-amino-5-formylamino-6-ribofuranosylamino-4(3H)-pyrimidinone ribonucleotide monophosphate and inorganic phosphate from GTP. Also has an independent pyrophosphate phosphohydrolase activity. The sequence is that of GTP cyclohydrolase III from Saccharolobus islandicus (strain M.14.25 / Kamchatka #1) (Sulfolobus islandicus).